The following is a 600-amino-acid chain: NADH-quinone oxidoreductase subunit C/D (600 aa).

The tract at residues 1–190 (MVNNMTDLTA…SPFELTKAKQ (190 aa)) is NADH dehydrogenase I subunit C. The segment at 214 to 600 (DFMFLNLGPN…IDFVMSDVDR (387 aa)) is NADH dehydrogenase I subunit D.

This sequence in the N-terminal section; belongs to the complex I 30 kDa subunit family. In the C-terminal section; belongs to the complex I 49 kDa subunit family. In terms of assembly, NDH-1 is composed of 13 different subunits. Subunits NuoB, CD, E, F, and G constitute the peripheral sector of the complex.

The protein resides in the cell inner membrane. It catalyses the reaction a quinone + NADH + 5 H(+)(in) = a quinol + NAD(+) + 4 H(+)(out). Functionally, NDH-1 shuttles electrons from NADH, via FMN and iron-sulfur (Fe-S) centers, to quinones in the respiratory chain. The immediate electron acceptor for the enzyme in this species is believed to be ubiquinone. Couples the redox reaction to proton translocation (for every two electrons transferred, four hydrogen ions are translocated across the cytoplasmic membrane), and thus conserves the redox energy in a proton gradient. The polypeptide is NADH-quinone oxidoreductase subunit C/D (Escherichia coli (strain K12 / DH10B)).